We begin with the raw amino-acid sequence, 745 residues long: Myeloperoxidase (745 aa).

The N-terminal stretch at 1–48 (MGVPFFSSLRCMVDLGPCWAGGLTAEMKLLLALAGLLAILATPQPSEG) is a signal peptide. Asn139 is a glycosylation site (N-linked (GlcNAc...) asparagine). Cys167 and Cys180 form a disulfide bridge. Asp260 lines the heme b pocket. His261 serves as the catalytic Proton acceptor. Asp262 is a binding site for Ca(2+). 2 cysteine pairs are disulfide-bonded: Cys281–Cys291 and Cys285–Cys309. Cys316 bears the Cysteine sulfenic acid (-SOH) mark. Residue Asn323 is glycosylated (N-linked (GlcNAc...) asparagine). Ca(2+) contacts are provided by Thr334, Phe336, Asp338, and Ser340. Residues Asn355 and Asn391 are each glycosylated (N-linked (GlcNAc...) asparagine). The cysteines at positions 387 and 398 are disulfide-linked. Positions 408 and 409 each coordinate heme b. Residue Asn483 is glycosylated (N-linked (GlcNAc...) asparagine). His502 serves as a coordination point for heme b. 2 cysteine pairs are disulfide-bonded: Cys606–Cys663 and Cys704–Cys730. N-linked (GlcNAc...) asparagine glycosylation occurs at Asn729.

Belongs to the peroxidase family. XPO subfamily. Homodimer; disulfide-linked. Each monomer consists of a light and a heavy chain. Found in a complex with CP and LTF; interacts directly with CP, which protects CP antioxidant properties by MPO. Ca(2+) serves as cofactor. Requires heme b as cofactor.

The protein resides in the lysosome. It carries out the reaction chloride + H2O2 + H(+) = hypochlorous acid + H2O. In terms of biological role, part of the host defense system of polymorphonuclear leukocytes. It is responsible for microbicidal activity against a wide range of organisms. In the stimulated PMN, MPO catalyzes the production of hypohalous acids, primarily hypochlorous acid in physiologic situations, and other toxic intermediates that greatly enhance PMN microbicidal activity. Mediates the proteolytic cleavage of alpha-1-microglobulin to form t-alpha-1-microglobulin, which potently inhibits oxidation of low-density lipoprotein particles and limits vascular damage. This is Myeloperoxidase from Homo sapiens (Human).